Here is a 145-residue protein sequence, read N- to C-terminus: 3-dehydroquinate dehydratase (145 aa).

Tyr-23 serves as the catalytic Proton acceptor. Substrate is bound by residues Asn-75, His-81, and Asp-88. The Proton donor role is filled by His-101. Substrate contacts are provided by residues 102 to 103 (IS) and Arg-112.

Belongs to the type-II 3-dehydroquinase family. As to quaternary structure, homododecamer.

The catalysed reaction is 3-dehydroquinate = 3-dehydroshikimate + H2O. The protein operates within metabolic intermediate biosynthesis; chorismate biosynthesis; chorismate from D-erythrose 4-phosphate and phosphoenolpyruvate: step 3/7. Catalyzes a trans-dehydration via an enolate intermediate. This is 3-dehydroquinate dehydratase from Caldicellulosiruptor saccharolyticus (strain ATCC 43494 / DSM 8903 / Tp8T 6331).